The chain runs to 304 residues: Ribosomal protein L11 methyltransferase (304 aa).

S-adenosyl-L-methionine is bound by residues Thr147, Gly168, Asp190, and Asn238.

This sequence belongs to the methyltransferase superfamily. PrmA family.

The protein resides in the cytoplasm. The enzyme catalyses L-lysyl-[protein] + 3 S-adenosyl-L-methionine = N(6),N(6),N(6)-trimethyl-L-lysyl-[protein] + 3 S-adenosyl-L-homocysteine + 3 H(+). Methylates ribosomal protein L11. In Prochlorococcus marinus (strain SARG / CCMP1375 / SS120), this protein is Ribosomal protein L11 methyltransferase.